A 206-amino-acid chain; its full sequence is High frequency lysogenization protein HflD homolog (206 aa).

It belongs to the HflD family.

The protein localises to the cytoplasm. Its subcellular location is the cell inner membrane. This Idiomarina loihiensis (strain ATCC BAA-735 / DSM 15497 / L2-TR) protein is High frequency lysogenization protein HflD homolog.